A 166-amino-acid polypeptide reads, in one-letter code: Regulatory protein RecX (166 aa).

This sequence belongs to the RecX family.

The protein resides in the cytoplasm. In terms of biological role, modulates RecA activity. The polypeptide is Regulatory protein RecX (Shigella boydii serotype 18 (strain CDC 3083-94 / BS512)).